A 409-amino-acid chain; its full sequence is MSVITTPIETLHLKSTLRLLPRAVYRSQRIQVFPPNIFSNTSLSSPLRIDPISQVGGSRNLWRRYASDNFSEMGLDPGADPFKVIEKPSIVDRMKKANSILPHVVLASTILALIYPPSFTWFTSRYFVPALGFLMFAVGINSNEKDFLEAFKRPKAILLGYVGQYLVKPVLGFIFGLAAVSLFQLPTPIGAGIMLVSCVSGAQLSNYATFLTDPALAPLSIVMTSLSTATAVLVTPMLSLLLIGKKLPVDVKGMISSILQVVIAPIAAGLLLNKLFPKVSNAIRPFLPILSVLDTACCVGAPLALNINSVMSPFGATILLLVTMFHLSAFLAGYFLTGSVFRNAPDAKAMQRTLSYETGMQSSLLALALATKFFQDPLVGIPPAISTVVMSLMGFTLVLIWSKEKSNTF.

The N-terminal 49 residues, 1–49, are a transit peptide targeting the chloroplast; that stretch reads MSVITTPIETLHLKSTLRLLPRAVYRSQRIQVFPPNIFSNTSLSSPLRI. 9 helical membrane passes run 100 to 120, 121 to 141, 170 to 190, 191 to 211, 221 to 241, 253 to 273, 285 to 305, 316 to 336, and 381 to 401; these read ILPHVVLASTILALIYPPSFT, WFTSRYFVPALGFLMFAVGIN, VLGFIFGLAAVSLFQLPTPIG, AGIMLVSCVSGAQLSNYATFL, IVMTSLSTATAVLVTPMLSLL, GMISSILQVVIAPIAAGLLLN, PFLPILSVLDTACCVGAPLAL, ATILLLVTMFHLSAFLAGYFL, and IPPAISTVVMSLMGFTLVLIW.

It belongs to the bile acid:sodium symporter (BASS) (TC 2.A.28) family.

It localises to the membrane. The protein localises to the plastid. The protein resides in the chloroplast envelope. Functionally, may function as sodium-coupled metabolite transporter across the chloroplast envelope. The polypeptide is Probable sodium/metabolite cotransporter BASS6, chloroplastic (BASS6) (Arabidopsis thaliana (Mouse-ear cress)).